A 418-amino-acid chain; its full sequence is Protein-lysine N-trimethyltransferase SMYD5 (418 aa).

One can recognise an SET domain in the interval 21–352 (VSVEVRFVSS…PGEEICISYL (332 aa)). Residues 98-136 (PELCTVRKDLHQNCPHCQVMYCSAECRLAATEQYHQVLC) form an MYND-type zinc finger. Residue Tyr-351 coordinates S-adenosyl-L-methionine. Positions 385–418 (ADEPNVTSEEEEEEEEEEEGEPEDAELGDEMTDV) are disordered.

It belongs to the class V-like SAM-binding methyltransferase superfamily. Interacts with the N-CoR complex. Interacts with EHMT2 and CBX5. Post-translationally, ubiquitinated and degradaed by the proteasome in response to mild hypothermia (32 degrees Celsius), relieving repression of the SP1 gene.

The protein localises to the cytoplasm. It carries out the reaction L-lysyl-[protein] + 3 S-adenosyl-L-methionine = N(6),N(6),N(6)-trimethyl-L-lysyl-[protein] + 3 S-adenosyl-L-homocysteine + 3 H(+). The enzyme catalyses L-lysyl(20)-[histone H4] + 3 S-adenosyl-L-methionine = N(6),N(6),N(6)-trimethyl-L-lysyl(20)-[histone H4] + 3 S-adenosyl-L-homocysteine + 3 H(+). It catalyses the reaction L-lysyl(36)-[histone H3] + 3 S-adenosyl-L-methionine = N(6),N(6),N(6)-trimethyl-L-lysyl(36)-[histone H3] + 3 S-adenosyl-L-homocysteine + 3 H(+). Functionally, protein-lysine N-trimethyltransferase that specifically catalyzes trimethylation of 'Lys-22' of the RPL40/eL40 subunit of the 60S ribosome, thereby promoting translation elongation and protein synthesis. May also act as a histone methyltransferase in the context of histone octamers, but not on nucleosome substrates: trimethylates 'Lys-36' of histone H3 and 'Lys-20' of histone H4 to form H3K36me3 and H4K20me3, respectively. The histone methyltransferase activity, which is independent of its SET domain, is however unsure in vivo. In association with the NCoR corepressor complex, involved in the repression of toll-like receptor 4 (TLR4)-target inflammatory genes in macrophages, possibly by catalyzing the formation of H4K20me3 at the gene promoters. Plays an important role in embryonic stem (ES) cell self-renewal and differentiation. Maintains genome stability of ES cells during differentiation through regulation of heterochromatin formation and repression of endogenous repetitive DNA elements by promoting H4K20me3 marks. Acts as a regulator of the hypothermia response: its degradation in response to mild hypothermia relieves the formation of H3K36me3 at gene promoters, allowing expression of the neuroprotective gene SP1. This Homo sapiens (Human) protein is Protein-lysine N-trimethyltransferase SMYD5.